Reading from the N-terminus, the 273-residue chain is DNA replication complex GINS protein psf2 (273 aa).

Disordered stretches follow at residues 88–110 (KEDP…SQPG) and 240–273 (ASAE…DMGL). Residues 244–257 (ATRREEEEEARRGG) are compositionally biased toward basic and acidic residues. Over residues 261–273 (GDGDEDSDEDMGL) the composition is skewed to acidic residues.

It belongs to the GINS2/PSF2 family. As to quaternary structure, component of the GINS complex which is a heterotetramer of div-26/sld5, drc-1/psf1, drc-2/psf2 and drc-3/psf3.

It localises to the nucleus. In terms of biological role, the GINS complex plays an essential role in the initiation of DNA replication. Has a role in chromosome segregation. This chain is DNA replication complex GINS protein psf2 (drc-2), found in Neurospora crassa (strain ATCC 24698 / 74-OR23-1A / CBS 708.71 / DSM 1257 / FGSC 987).